Consider the following 382-residue polypeptide: Protein-arginine rhamnosyltransferase (382 aa).

F18 to G19 contributes to the dTDP binding site. D20 serves as the catalytic Proton acceptor. Residues D20, Y187, V250–Q252, and R268–S272 each bind dTDP-beta-L-rhamnose. Residues Y187, V250–Q252, and R268–S272 each bind dTDP. The active site involves E270.

Belongs to the glycosyltransferase 104 family.

It catalyses the reaction dTDP-beta-L-rhamnose + L-arginyl-[protein] = N(omega)-(alpha-L-rhamnosyl)-L-arginyl-[protein] + dTDP + H(+). Its function is as follows. Protein-arginine rhamnosyltransferase that catalyzes the transfer of a single rhamnose to elongation factor P (EF-P) on 'Lys-32', a modification required for EF-P-dependent rescue of polyproline stalled ribosomes. This is Protein-arginine rhamnosyltransferase from Neisseria meningitidis serogroup B / serotype 15 (strain H44/76).